The following is a 182-amino-acid chain: MGHPKKPRKQYDTPSHPWNADRIKEENRLANKYGLKNKKEIWKAESRVKRYRRDARIILGMDIDERADKEKELLDHLVRAGFISPNAKLEEVLDLNVEDILRRRLQSLVFKRGLSHTAKEARLFVVHGHITLNGKKINAPGHLVEKADEENIDFYPGSSVAKQFETQETEEVAAEEEPKDEE.

2 disordered regions span residues 1–23 and 158–182; these read MGHP…ADRI and SSVA…KDEE. An S4 RNA-binding domain is found at 103-170; that stretch reads RRLQSLVFKR…AKQFETQETE (68 aa). Positions 167-182 are enriched in acidic residues; the sequence is QETEEVAAEEEPKDEE.

Belongs to the universal ribosomal protein uS4 family. Part of the 30S ribosomal subunit. Contacts protein S5. The interaction surface between S4 and S5 is involved in control of translational fidelity.

One of the primary rRNA binding proteins, it binds directly to 16S rRNA where it nucleates assembly of the body of the 30S subunit. Functionally, with S5 and S12 plays an important role in translational accuracy. This chain is Small ribosomal subunit protein uS4, found in Methanosphaera stadtmanae (strain ATCC 43021 / DSM 3091 / JCM 11832 / MCB-3).